Consider the following 562-residue polypeptide: Arginine--tRNA ligase (562 aa).

Residues 129–139 carry the 'HIGH' region motif; the sequence is ANPTGPLHVGH.

Belongs to the class-I aminoacyl-tRNA synthetase family. As to quaternary structure, monomer.

Its subcellular location is the cytoplasm. The enzyme catalyses tRNA(Arg) + L-arginine + ATP = L-arginyl-tRNA(Arg) + AMP + diphosphate. The polypeptide is Arginine--tRNA ligase (Xanthomonas oryzae pv. oryzae (strain MAFF 311018)).